The chain runs to 402 residues: uncharacterized protein (402 aa).

Transmembrane regions (helical) follow at residues 11 to 31 (LALA…IDMY), 48 to 68 (LVQL…LIVG), 80 to 100 (LLIC…SPNI), 108 to 125 (FLQG…RAIV), 140 to 160 (LLMV…GAIL), 167 to 187 (WHTI…LIAL), 219 to 239 (FMGY…YVSG), 254 to 274 (VFSI…FIIG), 286 to 306 (LRIA…MTMI), 308 to 328 (GPLA…GMVL), 347 to 367 (SALL…LVGI), and 373 to 393 (VPMG…FFGL).

This sequence belongs to the major facilitator superfamily. Bcr/CmlA family.

Its subcellular location is the cell membrane. This is an uncharacterized protein from Bacillus subtilis (strain 168).